The primary structure comprises 210 residues: Chaperone protein TorD (210 aa).

This sequence belongs to the TorD/DmsD family. TorD subfamily.

It localises to the cytoplasm. Its function is as follows. Involved in the biogenesis of TorA. Acts on TorA before the insertion of the molybdenum cofactor and, as a result, probably favors a conformation of the apoenzyme that is competent for acquiring the cofactor. This chain is Chaperone protein TorD, found in Salmonella choleraesuis (strain SC-B67).